The primary structure comprises 485 residues: Pre-glycoprotein polyprotein GP complex (485 aa).

Residue Gly2 is the site of N-myristoyl glycine; by host attachment. Residues 2-17 (GQLISFFGEIPTILQE) are Extracellular-facing. A helical transmembrane segment spans residues 18 to 33 (ALNIALIAVSIIATIK). Topologically, residues 34–58 (GVVNVWKSGLIQLLMFVMLAGRSCS) are cytoplasmic. Position 57 (Cys57) interacts with Zn(2+). The Extracellular segment spans residues 59–424 (VQIGHHLELE…QGRTPLSLVD (366 aa)). 4 disulfides stabilise this stretch: Cys85–Cys225, Cys271–Cys284, Cys293–Cys302, and Cys356–Cys377. Asn88, Asn128, Asn179, and Asn218 each carry an N-linked (GlcNAc...) asparagine; by host glycan. N-linked (GlcNAc...) asparagine; by host glycosylation is found at Asn357, Asn365, Asn382, and Asn387. A helical membrane pass occupies residues 425–445 (VCFWSTLFYTASIFLHLIRIP). Over 446 to 485 (THRHIVGEGCPKPHRLRADSTCACGLYKQKRRPLKWVRSN) the chain is Cytoplasmic. His447, His449, Cys455, His459, Cys467, and Cys469 together coordinate Zn(2+).

It belongs to the arenaviridae GPC protein family. In terms of assembly, interacts with glycoprotein G2. Part of the GP complex (GP-C) together with glycoprotein G1 and glycoprotein G2. The GP-complex interacts with protein Z, which interacts with ribonucleocapsid; these interactions may induce virion budding. As to quaternary structure, homotrimer; disulfide-linked. In pre-fusion state, G1 homotrimers bind G2 homotrimers via ionic interactions. Part of the GP complex (GP-C) together with glycoprotein G2 and the stable signal peptide. The GP-complex interacts with protein Z, which interacts with ribonucleocapsid; these interactions may induce virion budding. Homotrimer. Interacts with the stable signal peptide. In pre-fusion state, G2 homotrimers bind G1 homotrimers via ionic interactions. Part of the GP complex (GP-C) together with glycoprotein G1 and the stable signal peptide. Acidification in the endosome triggers rearrangements, which ultimately leads to a 6 helix bundle formed by the two heptad repeat domains (HR1 and HR2) in post-fusion state. The GP-complex interacts with protein Z, which interacts with ribonucleocapsid; these interactions may induce virion budding. Specific enzymatic cleavages in vivo yield mature proteins. GP-C polyprotein is cleaved in the endoplasmic reticulum by the host protease MBTPS1. Only cleaved glycoprotein is incorporated into virions. Post-translationally, the SSP remains stably associated with the GP complex following cleavage by signal peptidase and plays crucial roles in the trafficking of GP through the secretory pathway. In terms of processing, myristoylation is necessary for GP2-mediated fusion activity.

The protein resides in the virion membrane. It localises to the host endoplasmic reticulum membrane. The protein localises to the host Golgi apparatus membrane. It is found in the host cell membrane. Functionally, functions as a cleaved signal peptide that is retained as the third component of the GP complex (GP-C). Helps to stabilize the spike complex in its native conformation. The SSP is required for efficient glycoprotein expression, post-translational maturation cleavage of G1 and G2, glycoprotein transport to the cell surface plasma membrane, formation of infectious virus particles, and acid pH-dependent glycoprotein-mediated cell fusion. Its function is as follows. Forms the virion spikes together with glycoprotein G2. The glycoprotein spike trimers are connected to the underlying matrix. Interacts with the host receptor leading to virus endocytosis. Forms the virion spikes together with glycoprotein G1. The glycoprotein spike trimers are connected to the underlying matrix. Class I viral fusion protein that directs fusion of viral and host endosomal membranes, leading to delivery of the nucleocapsid into the cytoplasm. Membrane fusion is mediated by irreversible conformational changes induced by acidification. The polypeptide is Pre-glycoprotein polyprotein GP complex (Sigmodon hispidus (Hispid cotton rat)).